Consider the following 409-residue polypeptide: Argininosuccinate synthase (409 aa).

Residues 8–16 (AYSGGLDTS) and alanine 34 contribute to the ATP site. An L-citrulline-binding site is contributed by tyrosine 85. Glycine 115 serves as a coordination point for ATP. The L-aspartate site is built by threonine 117, asparagine 121, and aspartate 122. L-citrulline is bound at residue asparagine 121. L-citrulline contacts are provided by arginine 125, serine 178, serine 187, glutamate 268, and tyrosine 280.

Belongs to the argininosuccinate synthase family. Type 1 subfamily. In terms of assembly, homotetramer.

The protein localises to the cytoplasm. It carries out the reaction L-citrulline + L-aspartate + ATP = 2-(N(omega)-L-arginino)succinate + AMP + diphosphate + H(+). Its pathway is amino-acid biosynthesis; L-arginine biosynthesis; L-arginine from L-ornithine and carbamoyl phosphate: step 2/3. This is Argininosuccinate synthase from Thermotoga maritima (strain ATCC 43589 / DSM 3109 / JCM 10099 / NBRC 100826 / MSB8).